Here is a 544-residue protein sequence, read N- to C-terminus: MVAKNIKYNEEARKKIQKGVKTLAEAVKVTLGPKGRHVVIDKSFGSPQVTKDGVTVAKEVELADKHENMGAQMVKEVASKTADKAGDGTTTATVLAEAIYTEGLRNVTAGANPMDLKRGIDKAVKVVVDQIKKISKPVQHHKEIAQVATISANNDAEIGNLIAEAMEKVGKNGSITVEEAKGFETVLDVVEGMNFNRGYLSSYFATNPETQECVLEDALVLIYDKKISGIKDFLPVLQQVAESGRPLLIIAEDIEGEALATLVVNRIRGGFRVCAVKAPGFGDRRKAMLEDIAILTGGQLISEELGMKLENASLAMLGKAKKVIVSKEDTTIVEGMGEKEALDARCESIKKQIEDSTSDYDKEKLQERLAKLSGGVAVIRVGAATEIEMKEKKDRVDDAQHATIAAVEEGILPGGGTALIRCIPTLEAFLPMLTNEDERIGARIVLKALSAPLKQIAANAGKEGAIIFQQVMSRSANEGYDALRDAYTDMIEAGILDPAKVTRSALESAASVAGLLLTTEALIAEIPEEKPAAAPAMPGAGMDY.

ATP-binding positions include 30–33, lysine 51, 87–91, glycine 415, 481–483, and aspartate 497; these read TLGP, DGTTT, and DAL.

It belongs to the chaperonin (HSP60) family. Forms a cylinder of 14 subunits composed of two heptameric rings stacked back-to-back. Interacts with the co-chaperonin GroES.

The protein resides in the cytoplasm. It carries out the reaction ATP + H2O + a folded polypeptide = ADP + phosphate + an unfolded polypeptide.. Functionally, together with its co-chaperonin GroES, plays an essential role in assisting protein folding. The GroEL-GroES system forms a nano-cage that allows encapsulation of the non-native substrate proteins and provides a physical environment optimized to promote and accelerate protein folding. The sequence is that of Chaperonin GroEL from Chlamydia muridarum (strain MoPn / Nigg).